Reading from the N-terminus, the 1187-residue chain is Probable histidine kinase 5 (1187 aa).

At 1–175 the chain is on the extracellular side; it reads MSRVGECGGG…QNNALSFNHG (175 aa). Residues 176-196 form a helical membrane-spanning segment; the sequence is MIFSLSASLGIVVILVVITIF. Residues 197 to 226 lie on the Cytoplasmic side of the membrane; sequence KRGKQANELCQHEKLLQTPSVKISRKWSKR. The chain crosses the membrane as a helical span at residues 227 to 247; that stretch reads ALLLGVLVGLCSSVWIFSSMH. Over 248–531 the chain is Extracellular; the sequence is ADVVARRIEN…FKHAPSLPWS (284 aa). The 225-residue stretch at 295 to 519 folds into the CHASE domain; sequence NPSAIDQKTF…GDPTRKHVMH (225 aa). The chain crosses the membrane as a helical span at residues 532–552; the sequence is AIMISSAVAIIVLLVGYIIYA. At 553–1187 the chain is on the cytoplasmic side; that stretch reads TLNSLEEAED…LEADATDPLT (635 aa). The 276-residue stretch at 587–862 folds into the Histidine kinase domain; sequence TVSHEIRTPM…TFSFTAIFKE (276 aa). Histidine 590 is modified (phosphohistidine; by autocatalysis). Response regulatory domains lie at 886-1017 and 1041-1178; these read RALV…SKAL and NILV…AHFL. A 4-aspartylphosphate mark is found at aspartate 942 and aspartate 1091.

Activation probably requires a transfer of a phosphate group between a His in the transmitter domain and an Asp of the receiver domain. Highly expressed in young leaves and at lower levels in roots, mature leaves, stems and spikelets.

The protein resides in the cell membrane. It carries out the reaction ATP + protein L-histidine = ADP + protein N-phospho-L-histidine.. In terms of biological role, cytokinin receptor related to bacterial two-component regulators. Functions as a histidine kinase and transmits the stress signal to a downstream MAPK cascade. In Oryza sativa subsp. japonica (Rice), this protein is Probable histidine kinase 5.